A 251-amino-acid chain; its full sequence is Endoglucanase CX (251 aa).

Belongs to the glycosyl hydrolase 9 (cellulase E) family.

The enzyme catalyses Endohydrolysis of (1-&gt;4)-beta-D-glucosidic linkages in cellulose, lichenin and cereal beta-D-glucans.. In terms of biological role, degrades carboxymethylcellulose (CMC). This chain is Endoglucanase CX, found in Prunus persica (Peach).